Reading from the N-terminus, the 415-residue chain is Putative transcription factor BOFH (415 aa).

The tract at residues 159–221 (SQEPVQHQDQ…NEGEDDDGMD (63 aa)) is disordered. Positions 174–183 (INGGGRGGYW) are enriched in gly residues. Over residues 193-202 (QQQRRRKKRL) the composition is skewed to basic residues. Residues 206–220 (ETDDDGNEGEDDDGM) are compositionally biased toward acidic residues. DNA-binding regions lie at residues 234 to 238 (REHPF), 303 to 310 (NKPKMRHY), and 374 to 377 (YVPT).

It belongs to the FLO/LFY family. In terms of tissue distribution, acts in the floral primordia.

Its subcellular location is the nucleus. Its function is as follows. Controls floral meristem identity. Is required very early in flower development and may act here as a transcription factor. This Brassica oleracea var. botrytis (Cauliflower) protein is Putative transcription factor BOFH.